The primary structure comprises 311 residues: Protease HtpX homolog 1 (311 aa).

2 helical membrane passes run 12–32 (VISLGLTIISEGIVLIGIASL) and 35–55 (ISLFFIFPALVIFWLFQWIIS). His137 contacts Zn(2+). Glu138 is an active-site residue. Residue His141 coordinates Zn(2+). Helical transmembrane passes span 159–179 (VLGYISTLLMNFGYLALFLAA) and 184–204 (LLFAIAALAIGFVIFVVTFIL). Glu216 contributes to the Zn(2+) binding site.

This sequence belongs to the peptidase M48B family. The cofactor is Zn(2+).

The protein localises to the cell membrane. This chain is Protease HtpX homolog 1, found in Saccharolobus solfataricus (strain ATCC 35092 / DSM 1617 / JCM 11322 / P2) (Sulfolobus solfataricus).